The sequence spans 293 residues: uncharacterized protein (293 aa).

A coiled-coil region spans residues 65–89 (LQKYLENIKNKKLNLNKQSNNQTNN). The disordered stretch occupies residues 81-112 (KQSNNQTNNQTNNQTNNQTNNQTNNIRPQINN).

Its subcellular location is the virion. This is an uncharacterized protein from Acanthamoeba polyphaga mimivirus (APMV).